The primary structure comprises 383 residues: Outer membrane protein S2 (383 aa).

An N-terminal signal peptide occupies residues 1-21 (MKRKVLALVIPALLAAGAAHA).

It belongs to the Gram-negative porin family. In terms of assembly, homotrimer.

The protein resides in the cell outer membrane. Functionally, forms pores that allow passive diffusion of small molecules across the outer membrane. This is Outer membrane protein S2 (ompS2) from Salmonella typhi.